The primary structure comprises 313 residues: Porphobilinogen deaminase (313 aa).

An S-(dipyrrolylmethanemethyl)cysteine modification is found at Cys-243.

Belongs to the HMBS family. As to quaternary structure, monomer. The cofactor is dipyrromethane.

The enzyme catalyses 4 porphobilinogen + H2O = hydroxymethylbilane + 4 NH4(+). It functions in the pathway porphyrin-containing compound metabolism; protoporphyrin-IX biosynthesis; coproporphyrinogen-III from 5-aminolevulinate: step 2/4. Functionally, tetrapolymerization of the monopyrrole PBG into the hydroxymethylbilane pre-uroporphyrinogen in several discrete steps. The sequence is that of Porphobilinogen deaminase from Bordetella petrii (strain ATCC BAA-461 / DSM 12804 / CCUG 43448).